The sequence spans 144 residues: Transcription antitermination protein NusB (144 aa).

The protein belongs to the NusB family.

Functionally, involved in transcription antitermination. Required for transcription of ribosomal RNA (rRNA) genes. Binds specifically to the boxA antiterminator sequence of the ribosomal RNA (rrn) operons. In Pelotomaculum thermopropionicum (strain DSM 13744 / JCM 10971 / SI), this protein is Transcription antitermination protein NusB.